The following is a 195-amino-acid chain: Apoptosis-associated speck-like protein containing a CARD (195 aa).

The 91-residue stretch at 1-91 (MGRARDAILD…AGQLQAATHQ (91 aa)) folds into the Pyrin domain. Glycyl lysine isopeptide (Lys-Gly) (interchain with G-Cter in ubiquitin) cross-links involve residues lysine 55 and lysine 174. Positions 107–195 (AAKPGLHFID…SYLVEDLERS (89 aa)) constitute a CARD domain. Residue serine 195 is modified to Phosphoserine.

In terms of assembly, self-associates; enforced oligomerization induces apoptosis, NF-kappa-B regulation and interleukin-1 beta secretion. Homooligomers can form disk-like particles of approximately 12 nm diameter and approximately 1 nm height. Next to isoform 1, also isoform 2 and isoform 3 may be involved in oligomerization leading to functional regulation. Component of several inflammasomes containing one pattern recognition receptor/sensor, such as NLRP1, NLRP2, NLRP3, NLRP6, NLRC4, AIM2, MEFV or NOD2, and probably NLRC4, NLRP12 or IFI16. Major component of the ASC pyroptosome, a 1-2 um supramolecular assembly (one per macrophage cell) which consists of oligomerized PYCARD dimers and CASP1. Interacts with CASP1 (precursor form); the interaction induces activation of CASP1 leading to the processing of interleukin-1 beta; PYCARD competes with RIPK2 for binding to CASP1. Interacts with NLRP3; the interaction requires the homooligomerization of NLRP3. Interacts with NLRP2, NLRC4, MEFV, CARD16, AIM2, IFI16, NOD2, RIGI, RIPK2, PYDC1, PYDC2, NLRP10, CASP8, CHUK, IKBKB and BAX. Component of the AIM2 PANoptosome complex, a multiprotein complex that drives inflammatory cell death (PANoptosis). Phosphorylated. Post-translationally, 'Lys-63'-linked polyubiquitination by TRAF3 is critical for speck formation and inflammasome activation. 'Lys-63'-linked deubiquitinated by USP50; a crucial step for NLRP3-mediated inflammasome activation. 'Lys-63'-linked polyubiquitination by PELI1 is also critical for speck formation and inflammasome activation. Deubiquitinated by USP3 that cleaves 'Lys-48'-linked ubiquitin chains and strengthens its stability by blocking proteasomal degradation. In terms of tissue distribution, widely expressed at low levels. Detected in peripheral blood leukocytes, lung, small intestine, spleen, thymus, colon and at lower levels in placenta, liver and kidney. Very low expression in skeletal muscle, heart and brain. Expressed in lung epithelial cells (at protein level). Detected in the leukemia cell lines HL-60 and U-937, but not in Jurkat T-cell lymphoma and Daudi Burkitt's lymphoma. Detected in the melanoma cell line WM35, but not in WM793. Not detected in HeLa cervical carcinoma cells and MOLT-4 lymphocytic leukemia cells.

It localises to the cytoplasm. The protein localises to the inflammasome. Its subcellular location is the endoplasmic reticulum. It is found in the mitochondrion. The protein resides in the nucleus. It localises to the golgi apparatus membrane. Its function is as follows. Functions as a key mediator in apoptosis and inflammation. Promotes caspase-mediated apoptosis involving predominantly caspase-8 and also caspase-9 in a probable cell type-specific manner. Involved in activation of the mitochondrial apoptotic pathway, promotes caspase-8-dependent proteolytic maturation of BID independently of FADD in certain cell types and also mediates mitochondrial translocation of BAX and activates BAX-dependent apoptosis coupled to activation of caspase-9, -2 and -3. Involved in innate immune response by acting as an integral adapter in the assembly of various inflammasomes (NLRP1, NLRP2, NLRP3, NLRP6, AIM2 and probably IFI16) which recruit and activate caspase-1 leading to processing and secretion of pro-inflammatory cytokines. Caspase-1-dependent inflammation leads to macrophage pyroptosis, a form of cell death. The function as activating adapter in different types of inflammasomes is mediated by the pyrin and CARD domains and their homotypic interactions. Clustered PYCARD nucleates the formation of caspase-1 filaments through the interaction of their respective CARD domains, acting as a platform for of caspase-1 polymerization. In the NLRP1 and NLRC4 inflammasomes seems not be required but facilitates the processing of procaspase-1. In cooperation with NOD2 involved in an inflammasome activated by bacterial muramyl dipeptide leading to caspase-1 activation. May be involved in RIGI-triggered pro-inflammatory responses and inflammasome activation. In collaboration with AIM2 which detects cytosolic double-stranded DNA may also be involved in a caspase-1-independent cell death that involves caspase-8. In adaptive immunity may be involved in maturation of dendritic cells to stimulate T-cell immunity and in cytoskeletal rearrangements coupled to chemotaxis and antigen uptake may be involved in post-transcriptional regulation of the guanine nucleotide exchange factor DOCK2; the latter function is proposed to involve the nuclear form. Also involved in transcriptional activation of cytokines and chemokines independent of the inflammasome; this function may involve AP-1, NF-kappa-B, MAPK and caspase-8 signaling pathways. For regulation of NF-kappa-B activating and inhibiting functions have been reported. Modulates NF-kappa-B induction at the level of the IKK complex by inhibiting kinase activity of CHUK and IKBK. Proposed to compete with RIPK2 for association with CASP1 thereby down-regulating CASP1-mediated RIPK2-dependent NF-kappa-B activation and activating interleukin-1 beta processing. Modulates host resistance to DNA virus infection, probably by inducing the cleavage of and inactivating CGAS in presence of cytoplasmic double-stranded DNA. Functionally, may have a regulating effect on the function as inflammasome adapter. In terms of biological role, seems to inhibit inflammasome-mediated maturation of interleukin-1 beta. This chain is Apoptosis-associated speck-like protein containing a CARD, found in Homo sapiens (Human).